Here is a 318-residue protein sequence, read N- to C-terminus: Aspartate carbamoyltransferase catalytic subunit (318 aa).

Arg59 and Thr60 together coordinate carbamoyl phosphate. Lys87 serves as a coordination point for L-aspartate. Carbamoyl phosphate-binding residues include Arg109, His137, and Gln140. L-aspartate-binding residues include Arg170 and Arg224. Carbamoyl phosphate contacts are provided by Gly265 and Pro266.

The protein belongs to the aspartate/ornithine carbamoyltransferase superfamily. ATCase family. Heterododecamer (2C3:3R2) of six catalytic PyrB chains organized as two trimers (C3), and six regulatory PyrI chains organized as three dimers (R2).

It carries out the reaction carbamoyl phosphate + L-aspartate = N-carbamoyl-L-aspartate + phosphate + H(+). It functions in the pathway pyrimidine metabolism; UMP biosynthesis via de novo pathway; (S)-dihydroorotate from bicarbonate: step 2/3. Its function is as follows. Catalyzes the condensation of carbamoyl phosphate and aspartate to form carbamoyl aspartate and inorganic phosphate, the committed step in the de novo pyrimidine nucleotide biosynthesis pathway. In Allorhizobium ampelinum (strain ATCC BAA-846 / DSM 112012 / S4) (Agrobacterium vitis (strain S4)), this protein is Aspartate carbamoyltransferase catalytic subunit.